The following is a 202-amino-acid chain: Recombination protein RecR (202 aa).

Residues 56-71 form a C4-type zinc finger; sequence CVVCGTVSDGELCRIC. Residues 79–179 enclose the Toprim domain; sequence TMICVVEEPK…TVTRLASGLP (101 aa).

It belongs to the RecR family.

In terms of biological role, may play a role in DNA repair. It seems to be involved in an RecBC-independent recombinational process of DNA repair. It may act with RecF and RecO. The polypeptide is Recombination protein RecR (Nocardia farcinica (strain IFM 10152)).